The sequence spans 374 residues: Chaperone protein DnaJ (374 aa).

Positions 5-70 (DYYEVLGVNL…RKRASYDQFG (66 aa)) constitute a J domain. The CR-type zinc-finger motif lies at 133–210 (GLSRTIKVPT…CHGQGRQQQT (78 aa)). The Zn(2+) site is built by C146, C149, C162, C165, C184, C187, C198, and C201. 4 CXXCXGXG motif repeats span residues 146–153 (CKTCNGSG), 162–169 (CPRCNGSG), 184–191 (CSVCRGRG), and 198–205 (CTDCHGQG).

The protein belongs to the DnaJ family. As to quaternary structure, homodimer. Requires Zn(2+) as cofactor.

It is found in the cytoplasm. Participates actively in the response to hyperosmotic and heat shock by preventing the aggregation of stress-denatured proteins and by disaggregating proteins, also in an autonomous, DnaK-independent fashion. Unfolded proteins bind initially to DnaJ; upon interaction with the DnaJ-bound protein, DnaK hydrolyzes its bound ATP, resulting in the formation of a stable complex. GrpE releases ADP from DnaK; ATP binding to DnaK triggers the release of the substrate protein, thus completing the reaction cycle. Several rounds of ATP-dependent interactions between DnaJ, DnaK and GrpE are required for fully efficient folding. Also involved, together with DnaK and GrpE, in the DNA replication of plasmids through activation of initiation proteins. This chain is Chaperone protein DnaJ, found in Coxiella burnetii (strain RSA 331 / Henzerling II).